A 1616-amino-acid chain; its full sequence is Putative inactive phenolphthiocerol synthesis polyketide synthase type I Pks1 (1616 aa).

Positions 83 to 397 (TVVVFPGQGA…GQVFTTGVPV (315 aa)) are acyltransferase. Ser174 (for acyltransferase activity) is an active-site residue. The segment at 445-567 (HALLGAVVER…GMLGVAAAET (123 aa)) is N-terminal hotdog fold. A dehydratase region spans residues 445-605 (HALLGAVVER…YAYGPAFQGL (161 aa)). Residues 445 to 719 (HALLGAVVER…TRPITAEQLR (275 aa)) form the PKS/mFAS DH domain. His477 (proton acceptor; for dehydratase activity) is an active-site residue. The tract at residues 579 to 719 (AESVDISDGY…TRPITAEQLR (141 aa)) is C-terminal hotdog fold. The active-site Proton donor; for dehydratase activity is Asp640. Positions 910–1215 (GTLEDLVIQP…QARHIGKVVL (306 aa)) are enoylreductase. NADP(+) contacts are provided by residues 1040 to 1057 (VLIH…VQLA) and 1229 to 1244 (TVVI…GVLA). Residues 1228–1409 (GTVVITGATG…SLAWGLWEQP (182 aa)) form a beta-ketoacyl reductase region. The Carrier domain maps to 1514–1589 (ELLVGLVCLQ…AVAEYVAQQM (76 aa)). Ser1549 carries the post-translational modification O-(pantetheine 4'-phosphoryl)serine. The span at 1588–1604 (QMSGSRPTESGDPTSQV) shows a compositional bias: polar residues. The segment at 1588-1616 (QMSGSRPTESGDPTSQVVEPAAAEVSVHA) is disordered.

Pantetheine 4'-phosphate is required as a cofactor.

The protein operates within lipid metabolism; fatty acid biosynthesis. Functionally, may play a role in phthiocerol biosynthesis. This chain is Putative inactive phenolphthiocerol synthesis polyketide synthase type I Pks1 (pks1), found in Mycobacterium tuberculosis (strain ATCC 25618 / H37Rv).